Consider the following 389-residue polypeptide: Glutamate 5-kinase (389 aa).

K16 contributes to the ATP binding site. Substrate contacts are provided by S56, D143, and N155. 175-176 (SD) serves as a coordination point for ATP. Positions 281-358 (AGELHVDEGA…AEIEAILGYA (78 aa)) constitute a PUA domain.

The protein belongs to the glutamate 5-kinase family.

Its subcellular location is the cytoplasm. It catalyses the reaction L-glutamate + ATP = L-glutamyl 5-phosphate + ADP. The protein operates within amino-acid biosynthesis; L-proline biosynthesis; L-glutamate 5-semialdehyde from L-glutamate: step 1/2. Functionally, catalyzes the transfer of a phosphate group to glutamate to form L-glutamate 5-phosphate. This is Glutamate 5-kinase from Rhizobium rhizogenes (strain K84 / ATCC BAA-868) (Agrobacterium radiobacter).